We begin with the raw amino-acid sequence, 235 residues long: Glucosamine-6-phosphate deaminase (235 aa).

The active-site Proton acceptor; for enolization step is Asp-62. The For ring-opening step role is filled by Asn-128. The Proton acceptor; for ring-opening step role is filled by His-130. Residue Glu-135 is the For ring-opening step of the active site.

Belongs to the glucosamine/galactosamine-6-phosphate isomerase family. NagB subfamily.

The catalysed reaction is alpha-D-glucosamine 6-phosphate + H2O = beta-D-fructose 6-phosphate + NH4(+). It functions in the pathway amino-sugar metabolism; N-acetylneuraminate degradation; D-fructose 6-phosphate from N-acetylneuraminate: step 5/5. Functionally, catalyzes the reversible isomerization-deamination of glucosamine 6-phosphate (GlcN6P) to form fructose 6-phosphate (Fru6P) and ammonium ion. The protein is Glucosamine-6-phosphate deaminase of Streptococcus pneumoniae (strain JJA).